The following is a 302-amino-acid chain: Probable 2-(5''-triphosphoribosyl)-3'-dephosphocoenzyme-A synthase 1 (302 aa).

This sequence belongs to the CitG/MdcB family.

It carries out the reaction 3'-dephospho-CoA + ATP = 2'-(5''-triphospho-alpha-D-ribosyl)-3'-dephospho-CoA + adenine. In Salmonella typhimurium (strain LT2 / SGSC1412 / ATCC 700720), this protein is Probable 2-(5''-triphosphoribosyl)-3'-dephosphocoenzyme-A synthase 1.